Here is a 105-residue protein sequence, read N- to C-terminus: UPF0145 protein (105 aa).

The protein belongs to the UPF0145 family.

This is UPF0145 protein from Enterococcus faecalis (Streptococcus faecalis).